The following is a 141-amino-acid chain: Small ribosomal subunit protein bS6 (141 aa).

The segment at 96–141 (VTGQSEMLKAEENRSERRERRERPEHADSAEGDDSNDSDSSDNADE) is disordered. Basic and acidic residues predominate over residues 103-124 (LKAEENRSERRERRERPEHADS). Residues 125-141 (AEGDDSNDSDSSDNADE) show a composition bias toward acidic residues.

The protein belongs to the bacterial ribosomal protein bS6 family.

In terms of biological role, binds together with bS18 to 16S ribosomal RNA. This is Small ribosomal subunit protein bS6 from Pseudomonas putida (strain ATCC 700007 / DSM 6899 / JCM 31910 / BCRC 17059 / LMG 24140 / F1).